Consider the following 261-residue polypeptide: Indole-3-glycerol phosphate synthase (261 aa).

It belongs to the TrpC family.

The catalysed reaction is 1-(2-carboxyphenylamino)-1-deoxy-D-ribulose 5-phosphate + H(+) = (1S,2R)-1-C-(indol-3-yl)glycerol 3-phosphate + CO2 + H2O. It functions in the pathway amino-acid biosynthesis; L-tryptophan biosynthesis; L-tryptophan from chorismate: step 4/5. This is Indole-3-glycerol phosphate synthase from Burkholderia pseudomallei (strain 1710b).